The chain runs to 300 residues: Tyrosine phosphatase-like protein J1 (300 aa).

Positions 27–294 constitute a Tyrosine-protein phosphatase domain; it reads LKREHEHIMQ…IFCYFTVLQF (268 aa).

Belongs to the protein-tyrosine phosphatase family.

This Microplitis demolitor (Parasitoid wasp) protein is Tyrosine phosphatase-like protein J1 (J1).